Consider the following 296-residue polypeptide: NAD kinase (296 aa).

D78 serves as the catalytic Proton acceptor. Residues 78 to 79, 152 to 153, R180, D182, and Q251 contribute to the NAD(+) site; these read DG and ND.

This sequence belongs to the NAD kinase family. A divalent metal cation is required as a cofactor.

The protein resides in the cytoplasm. It carries out the reaction NAD(+) + ATP = ADP + NADP(+) + H(+). Functionally, involved in the regulation of the intracellular balance of NAD and NADP, and is a key enzyme in the biosynthesis of NADP. Catalyzes specifically the phosphorylation on 2'-hydroxyl of the adenosine moiety of NAD to yield NADP. This chain is NAD kinase, found in Neisseria meningitidis serogroup C (strain 053442).